The primary structure comprises 159 residues: Eukaryotic translation initiation factor 5A (159 aa).

Lys55 carries the hypusine modification.

The protein belongs to the eIF-5A family. Post-translationally, lys-55 undergoes hypusination, a unique post-translational modification that consists in the addition of a butylamino group from spermidine to lysine side chain, leading to the formation of the unusual amino acid hypusine. eIF-5As are the only known proteins to undergo this modification, which is essential for their function.

The protein localises to the cytoplasm. Functionally, translation factor that promotes translation elongation and termination, particularly upon ribosome stalling at specific amino acid sequence contexts. Binds between the exit (E) and peptidyl (P) site of the ribosome and promotes rescue of stalled ribosome: specifically required for efficient translation of polyproline-containing peptides as well as other motifs that stall the ribosome. Acts as a ribosome quality control (RQC) cofactor by joining the RQC complex to facilitate peptidyl transfer during CAT tailing step. The chain is Eukaryotic translation initiation factor 5A (eif5a) from Dictyostelium discoideum (Social amoeba).